The chain runs to 813 residues: Cadherin-22 (813 aa).

Positions 1-33 are cleaved as a signal peptide; the sequence is MRPRPEGALRAGAALSPVLLFLLLLPLLGHLWA. Over 34 to 621 the chain is Extracellular; sequence ASTPAPSSLS…AFVMAASLSP (588 aa). Cadherin domains follow at residues 61–165, 166–274, 275–391, 392–495, and 496–613; these read WVWN…EPRF, LHGP…PPRF, PQKM…PPEF, RPPS…NPPE, and LATP…TTAF. Asn159 carries N-linked (GlcNAc...) asparagine glycosylation. Residues Asn463 and Asn609 are each glycosylated (N-linked (GlcNAc...) asparagine). The chain crosses the membrane as a helical span at residues 622-642; that stretch reads GALIALLVCVLILVVLALLIL. The Cytoplasmic segment spans residues 643 to 813; that stretch reads TLRRHHKSHL…HRGDDEAPAS (171 aa). A disordered region spans residues 696 to 726; that stretch reads GGDPGGGAASPPQAASSSERHSLPRGPSSPE.

As to expression, predominantly expressed in brain. Abundant in olfactory bulb, cerebrum, and cerebellum, less in pons, medulla, and spinal cord. Low expression in heart. No expression in lung, liver, spleen, kidney, testis, stomach, intestine, colon, and placenta.

It localises to the cell membrane. Its function is as follows. Cadherins are calcium-dependent cell adhesion proteins. They preferentially interact with themselves in a homophilic manner in connecting cells; cadherins may thus contribute to the sorting of heterogeneous cell types. PB-cadherins may have a role in the morphological organization of pituitary gland and brain tissues. In Mus musculus (Mouse), this protein is Cadherin-22 (Cdh22).